The following is a 306-amino-acid chain: Ribosomal protein L11 methyltransferase (306 aa).

4 residues coordinate S-adenosyl-L-methionine: threonine 154, glycine 179, aspartate 201, and asparagine 242.

This sequence belongs to the methyltransferase superfamily. PrmA family.

The protein localises to the cytoplasm. It catalyses the reaction L-lysyl-[protein] + 3 S-adenosyl-L-methionine = N(6),N(6),N(6)-trimethyl-L-lysyl-[protein] + 3 S-adenosyl-L-homocysteine + 3 H(+). Methylates ribosomal protein L11. The sequence is that of Ribosomal protein L11 methyltransferase from Xylella fastidiosa (strain 9a5c).